The following is a 346-amino-acid chain: Heparan sulfate glucosamine 3-O-sulfotransferase 5 (346 aa).

The Cytoplasmic portion of the chain corresponds to 1-12 (MLFKQQVWLRQK). Residues 13–32 (LLVLGSLAVGSLLYLVARVG) form a helical; Signal-anchor for type II membrane protein membrane-spanning segment. At 33-346 (SLDRLQPICP…QITGRTLNWP (314 aa)) the chain is on the lumenal side. The N-linked (GlcNAc...) asparagine glycan is linked to N75. Position 100-104 (100-104 (KGGTR)) interacts with 3'-phosphoadenylyl sulfate. Residues 122-128 (EIHFFDN) and 155-158 (KSPA) each bind substrate. N173 carries an N-linked (GlcNAc...) asparagine glycan. R183 and S191 together coordinate 3'-phosphoadenylyl sulfate. N-linked (GlcNAc...) asparagine glycosylation is present at N204. Residue 226–227 (YK) participates in substrate binding. N287 is a glycosylation site (N-linked (GlcNAc...) asparagine). A 3'-phosphoadenylyl sulfate-binding site is contributed by Y293. C294 and C304 are joined by a disulfide. 309–313 (KGRIH) lines the 3'-phosphoadenylyl sulfate pocket.

Belongs to the sulfotransferase 1 family.

It localises to the golgi apparatus membrane. The enzyme catalyses alpha-D-glucosaminyl-[heparan sulfate](n) + 3'-phosphoadenylyl sulfate = 3-sulfo-alpha-D-glucosaminyl-[heparan sulfate](n) + adenosine 3',5'-bisphosphate + H(+). Functionally, sulfotransferase that utilizes 3'-phospho-5'-adenylyl sulfate (PAPS) to catalyze the transfer of a sulfo group to position 3 of glucosamine residues in heparan. Catalyzes the rate limiting step in the biosynthesis of heparan sulfate (HSact). This modification is a crucial step in the biosynthesis of anticoagulant heparan sulfate as it completes the structure of the antithrombin pentasaccharide binding site. Also generates GlcUA-GlcNS or IdoUA-GlcNS and IdoUA2S-GlcNH2. The protein is Heparan sulfate glucosamine 3-O-sulfotransferase 5 (Hs3st5) of Mus musculus (Mouse).